We begin with the raw amino-acid sequence, 275 residues long: Rhamnulose-1-phosphate aldolase (275 aa).

Residue glutamate 117 is part of the active site. Zn(2+) contacts are provided by histidine 141, histidine 143, and histidine 212.

Belongs to the aldolase class II family. RhaD subfamily. As to quaternary structure, homotetramer. Requires Zn(2+) as cofactor.

It is found in the cytoplasm. It catalyses the reaction L-rhamnulose 1-phosphate = (S)-lactaldehyde + dihydroxyacetone phosphate. It functions in the pathway carbohydrate degradation; L-rhamnose degradation; glycerone phosphate from L-rhamnose: step 3/3. In terms of biological role, catalyzes the reversible cleavage of L-rhamnulose-1-phosphate to dihydroxyacetone phosphate (DHAP) and L-lactaldehyde. The sequence is that of Rhamnulose-1-phosphate aldolase from Salmonella heidelberg (strain SL476).